A 348-amino-acid polypeptide reads, in one-letter code: Phosphoribosylformylglycinamidine cyclo-ligase (348 aa).

It belongs to the AIR synthase family.

The protein resides in the cytoplasm. The enzyme catalyses 2-formamido-N(1)-(5-O-phospho-beta-D-ribosyl)acetamidine + ATP = 5-amino-1-(5-phospho-beta-D-ribosyl)imidazole + ADP + phosphate + H(+). It participates in purine metabolism; IMP biosynthesis via de novo pathway; 5-amino-1-(5-phospho-D-ribosyl)imidazole from N(2)-formyl-N(1)-(5-phospho-D-ribosyl)glycinamide: step 2/2. The protein is Phosphoribosylformylglycinamidine cyclo-ligase of Cereibacter sphaeroides (strain KD131 / KCTC 12085) (Rhodobacter sphaeroides).